The primary structure comprises 286 residues: MELTINTEKETADILDAFIKVAPYLNSLVQDDITIGIYDTEKLLVNIPAKTFSLNVKAGDPLQEGDIITDAIRSNQKKTSMVPKELFGFPLIARAIPLHDENGRVIGGVGLGTSLEESSKLHDVAESLSAVVEQTAAAISDISESINGFSTQMSGISSQAKKVSESAGEIADISVTVKGISDQSNLLGLNAAIEAARAGESGKGFSVVADEIRKLATHSKENVGQIDQITKKIHSLLKGLEESIESINQHTDGQAAAVEQISATMQEISGSAQHLAKMAEKALEEE.

The 219-residue stretch at 68–286 (ITDAIRSNQK…KMAEKALEEE (219 aa)) folds into the Methyl-accepting transducer domain.

This sequence belongs to the methyl-accepting chemotaxis (MCP) protein family.

Its function is as follows. Chemotactic-signal transducers respond to changes in the concentration of attractants and repellents in the environment, transduce a signal from the outside to the inside of the cell, and facilitate sensory adaptation through the variation of the level of methylation. Attractants increase the level of methylation while repellents decrease the level of methylation. This is Putative sensory transducer protein YfmS (yfmS) from Bacillus subtilis (strain 168).